The chain runs to 152 residues: Transcriptional regulator MraZ (152 aa).

SpoVT-AbrB domains are found at residues 5–52 (ATMV…PLPE) and 81–124 (ASEC…DEQT).

The protein belongs to the MraZ family. As to quaternary structure, forms oligomers.

It localises to the cytoplasm. The protein resides in the nucleoid. Its function is as follows. Negatively regulates its own expression and that of the subsequent genes in the proximal part of the division and cell wall (dcw) gene cluster. Acts by binding directly to DNA. May also regulate the expression of genes outside the dcw cluster. The sequence is that of Transcriptional regulator MraZ from Yersinia pseudotuberculosis serotype O:1b (strain IP 31758).